Here is a 439-residue protein sequence, read N- to C-terminus: Chitinase-like protein Idgf1 (439 aa).

The signal sequence occupies residues 1-20; sequence MRFQLFYILGLLSVTSLTHA. The GH18 domain occupies 22 to 439; sequence SNLICYYDSN…ILRSIKYFMG (418 aa). A disulfide bridge links C26 with C53. N-linked (GlcNAc...) asparagine glycosylation is found at N122, N218, and N346. A disulfide bond links C340 and C423.

This sequence belongs to the glycosyl hydrolase 18 family. IDGF subfamily. In terms of tissue distribution, primarily expressed in yolk cells and fat body. In larvae, it is expressed in large salivary gland cells and weakly expressed in imaginal disks. Less expressed than Idgf2 and Idgf4.

The protein resides in the secreted. In terms of biological role, cooperates with insulin-like peptides to stimulate the proliferation, polarization and motility of imaginal disk cells. May act by stabilizing the binding of insulin-like peptides to its receptor through a simultaneous interaction with both molecules to form a multiprotein signaling complex. This is Chitinase-like protein Idgf1 (Idgf1) from Drosophila melanogaster (Fruit fly).